A 218-amino-acid chain; its full sequence is Octanoyltransferase (218 aa).

One can recognise a BPL/LPL catalytic domain in the interval Glu31–Gln206. Substrate-binding positions include Arg70–His77, Ser137–Gly139, and Gly150–Ala152. Cys168 functions as the Acyl-thioester intermediate in the catalytic mechanism.

Belongs to the LipB family.

Its subcellular location is the cytoplasm. The enzyme catalyses octanoyl-[ACP] + L-lysyl-[protein] = N(6)-octanoyl-L-lysyl-[protein] + holo-[ACP] + H(+). The protein operates within protein modification; protein lipoylation via endogenous pathway; protein N(6)-(lipoyl)lysine from octanoyl-[acyl-carrier-protein]: step 1/2. Its function is as follows. Catalyzes the transfer of endogenously produced octanoic acid from octanoyl-acyl-carrier-protein onto the lipoyl domains of lipoate-dependent enzymes. Lipoyl-ACP can also act as a substrate although octanoyl-ACP is likely to be the physiological substrate. In Vibrio vulnificus (strain CMCP6), this protein is Octanoyltransferase.